Here is a 217-residue protein sequence, read N- to C-terminus: Somatotropin (217 aa).

An N-terminal signal peptide occupies residues 1 to 27 (MMAAGPRTSLLLAFTLLCLPWTQVVGA). Histidine 46 contacts Zn(2+). A disulfide bond links cysteine 79 and cysteine 190. Serine 132 is modified (phosphoserine). Position 199 (glutamate 199) interacts with Zn(2+). Cysteine 207 and cysteine 215 form a disulfide bridge.

Belongs to the somatotropin/prolactin family.

The protein resides in the secreted. In terms of biological role, plays an important role in growth control. Its major role in stimulating body growth is to stimulate the liver and other tissues to secrete IGF1. It stimulates both the differentiation and proliferation of myoblasts. It also stimulates amino acid uptake and protein synthesis in muscle and other tissues. This Capra hircus (Goat) protein is Somatotropin (GH1).